The chain runs to 259 residues: Malonyl-[acyl-carrier protein] O-methyltransferase (259 aa).

It belongs to the methyltransferase superfamily.

It carries out the reaction malonyl-[ACP] + S-adenosyl-L-methionine = malonyl-[ACP] methyl ester + S-adenosyl-L-homocysteine. Its pathway is cofactor biosynthesis; biotin biosynthesis. Functionally, converts the free carboxyl group of a malonyl-thioester to its methyl ester by transfer of a methyl group from S-adenosyl-L-methionine (SAM). It allows to synthesize pimeloyl-ACP via the fatty acid synthetic pathway. The protein is Malonyl-[acyl-carrier protein] O-methyltransferase of Anoxybacillus flavithermus (strain DSM 21510 / WK1).